Here is a 401-residue protein sequence, read N- to C-terminus: MKTEVAEAIAEITRGAEEVLLEQELAEKLASGKPLTVKAGFDPTAPDLHLGHTVLINKLRVFQDFGHKVVFLIGDFTGMIGDPTGKNVTRKPLTTEQVIANAETYKEQVFKILDPAKTEIRFNSEWMSKMGAADMIKLAARQTVARMLERDDFKKRYQNNQSIAIHEFLYPLVQGWDSVELKADVELGGTDQRFNLLMGRELQKEEGQRPQTVIMTPLLEGLDGVQKMSKSLNNYIGITEPANDMFGKIMSVSDELMWRYFQLLSFRSITEIDELKAAVADGKNPRDVKVLLAKEIIARFHSEDDAEKAEQDFIQRFQKNALPDDIPEKTVQVGAEGMAIGNVLKEAGLVESTSEALRMIKQNAVKVDGEKFSDSRYLCTEKDSGVYQVGKRRFAKINLTA.

Positions 43-52 (PTAPDLHLGH) match the 'HIGH' region motif. The 'KMSKS' region signature appears at 227–231 (KMSKS). Residue Lys230 coordinates ATP. In terms of domain architecture, S4 RNA-binding spans 338-399 (MAIGNVLKEA…GKRRFAKINL (62 aa)).

Belongs to the class-I aminoacyl-tRNA synthetase family. TyrS type 2 subfamily. As to quaternary structure, homodimer.

It is found in the cytoplasm. The catalysed reaction is tRNA(Tyr) + L-tyrosine + ATP = L-tyrosyl-tRNA(Tyr) + AMP + diphosphate + H(+). In terms of biological role, catalyzes the attachment of tyrosine to tRNA(Tyr) in a two-step reaction: tyrosine is first activated by ATP to form Tyr-AMP and then transferred to the acceptor end of tRNA(Tyr). In Idiomarina loihiensis (strain ATCC BAA-735 / DSM 15497 / L2-TR), this protein is Tyrosine--tRNA ligase.